Consider the following 249-residue polypeptide: Diaminopimelate epimerase (249 aa).

Substrate is bound by residues asparagine 11 and asparagine 60. Residue cysteine 69 is the Proton donor of the active site. Residues 70–71 (GN), asparagine 164, and 182–183 (ER) contribute to the substrate site. Cysteine 192 (proton acceptor) is an active-site residue. A substrate-binding site is contributed by 193–194 (GT).

The protein belongs to the diaminopimelate epimerase family. In terms of assembly, homodimer.

The protein resides in the cytoplasm. The enzyme catalyses (2S,6S)-2,6-diaminopimelate = meso-2,6-diaminopimelate. It participates in amino-acid biosynthesis; L-lysine biosynthesis via DAP pathway; DL-2,6-diaminopimelate from LL-2,6-diaminopimelate: step 1/1. Catalyzes the stereoinversion of LL-2,6-diaminopimelate (L,L-DAP) to meso-diaminopimelate (meso-DAP), a precursor of L-lysine and an essential component of the bacterial peptidoglycan. This is Diaminopimelate epimerase from Campylobacter jejuni subsp. doylei (strain ATCC BAA-1458 / RM4099 / 269.97).